Consider the following 102-residue polypeptide: NADH-quinone oxidoreductase subunit K (102 aa).

Transmembrane regions (helical) follow at residues 6 to 26, 31 to 51, and 62 to 82; these read ATHFLLLSAALFIIGMVGVLT, LVIFMCIELMLNAVNVSLIGF, and VFALFVIAIAAAEAVVGLGIV.

It belongs to the complex I subunit 4L family. In terms of assembly, NDH-1 is composed of 14 different subunits. Subunits NuoA, H, J, K, L, M, N constitute the membrane sector of the complex.

Its subcellular location is the cell membrane. The enzyme catalyses a quinone + NADH + 5 H(+)(in) = a quinol + NAD(+) + 4 H(+)(out). Its function is as follows. NDH-1 shuttles electrons from NADH, via FMN and iron-sulfur (Fe-S) centers, to quinones in the respiratory chain. The immediate electron acceptor for the enzyme in this species is believed to be ubiquinone. Couples the redox reaction to proton translocation (for every two electrons transferred, four hydrogen ions are translocated across the cytoplasmic membrane), and thus conserves the redox energy in a proton gradient. This Thermomicrobium roseum (strain ATCC 27502 / DSM 5159 / P-2) protein is NADH-quinone oxidoreductase subunit K.